We begin with the raw amino-acid sequence, 429 residues long: Acetylornithine aminotransferase (429 aa).

Pyridoxal 5'-phosphate is bound by residues 126–127 (GA) and phenylalanine 160. Arginine 163 lines the N(2)-acetyl-L-ornithine pocket. 251 to 254 (DEVQ) lines the pyridoxal 5'-phosphate pocket. Lysine 280 is modified (N6-(pyridoxal phosphate)lysine). Position 307 (serine 307) interacts with N(2)-acetyl-L-ornithine. Threonine 308 contacts pyridoxal 5'-phosphate.

This sequence belongs to the class-III pyridoxal-phosphate-dependent aminotransferase family. ArgD subfamily. Homodimer. Pyridoxal 5'-phosphate is required as a cofactor.

It localises to the cytoplasm. The enzyme catalyses N(2)-acetyl-L-ornithine + 2-oxoglutarate = N-acetyl-L-glutamate 5-semialdehyde + L-glutamate. It participates in amino-acid biosynthesis; L-arginine biosynthesis; N(2)-acetyl-L-ornithine from L-glutamate: step 4/4. N-acetylornithine aminotransferase activity is stimulated by the addition of Mg(2+), Ca(2+) or Mn(2+), and inhibited by the addition of Zn(2+), Cu(2+), Co(2+) or Ni(2+). In terms of biological role, catalyzes the reversible conversion of N-acetylornithine to N-acetylglutamate-5-semialdehyde. In vitro, also shows very low ornithine aminotransferase (OAT) and gamma-aminobutyrate aminotransferase (GABA-AT) activity, catalyzing the conversion of ornithine (Orn) to glutamate-5-semialdehyde and of gamma-aminobutyric acid (GABA) to succinate semialdehyde. It has been shown to function as a GABA-AT and contributes to closing the tricarboxylic acid cycle of Synechocystis sp. PCC6803 via the GABA shunt. However, the catalytic efficiency toward N-acetylornithine is 2500-fold and 10700-fold higher than that toward ornithine and gamma-aminobutyrate, respectively, indicating that the protein mainly functions as an N-acetylornithine aminotransferase. This chain is Acetylornithine aminotransferase, found in Synechocystis sp. (strain ATCC 27184 / PCC 6803 / Kazusa).